The chain runs to 302 residues: Recombination-associated protein RdgC (302 aa).

Belongs to the RdgC family.

The protein resides in the cytoplasm. It is found in the nucleoid. In terms of biological role, may be involved in recombination. This chain is Recombination-associated protein RdgC, found in Xylella fastidiosa (strain 9a5c).